The following is a 96-amino-acid chain: ATP synthase subunit e, mitochondrial (96 aa).

S2 carries the N-acetylserine modification.

The protein belongs to the ATPase e subunit family. F-type ATPases have 2 components, CF(1) - the catalytic core - and CF(0) - the membrane proton channel. In yeast, the dimeric form of ATP synthase consists of 17 polypeptides: alpha, beta, gamma, delta, epsilon, 4 (B), 5 (OSCP), 6 (A), 8, 9 (C), d, E (Tim11), f, g, h, i/j and k.

It is found in the mitochondrion. The protein localises to the mitochondrion inner membrane. Mitochondrial membrane ATP synthase (F(1)F(0) ATP synthase or Complex V) produces ATP from ADP in the presence of a proton gradient across the membrane which is generated by electron transport complexes of the respiratory chain. F-type ATPases consist of two structural domains, F(1) - containing the extramembraneous catalytic core, and F(0) - containing the membrane proton channel, linked together by a central stalk and a peripheral stalk. During catalysis, ATP synthesis in the catalytic domain of F(1) is coupled via a rotary mechanism of the central stalk subunits to proton translocation. Part of the complex F(0) domain. Minor subunit located with subunit a in the membrane. This chain is ATP synthase subunit e, mitochondrial (TIM11), found in Saccharomyces cerevisiae (strain ATCC 204508 / S288c) (Baker's yeast).